The following is a 519-amino-acid chain: Transcription factor STP1 (519 aa).

The segment at 16-35 is i; it reads IPGKIYAFFRELVSGVIISK. The span at 47–61 shows a compositional bias: basic and acidic residues; that stretch reads ATKEEGKDAADEEKT. Disordered regions lie at residues 47–69 and 115–150; these read ATKEEGKDAADEEKTTTSLFPES and LLGSRPEQDTGAPIKMSTGVTSSPLSPSGSTPEHST. The segment at 65 to 97 is II; sequence LFPESNNIDRSLNGGCSVIPCSMDVSDLNTPIS. The span at 131 to 146 shows a compositional bias: low complexity; that stretch reads STGVTSSPLSPSGSTP. The C2H2-type 1 zinc-finger motif lies at 160–182; it reads FICHYCDATFRIRGYLTRHIKKH. The C2H2-type 2; atypical zinc-finger motif lies at 188-223; that stretch reads YHCPFFNSATPPDLRCHNSGGFSRRDTYKTHLKARH. The segment at 240 to 265 adopts a C2H2-type 3; atypical zinc-finger fold; sequence GHCAQCGEYFSTIENFVENHIESGDC. The interval 357-382 is disordered; it reads IKKKQQQVSGSTVTTPEVATQNNQEV. Over residues 364-381 the composition is skewed to polar residues; that stretch reads VSGSTVTTPEVATQNNQE.

In terms of assembly, interacts (via Region II) with SSY5; protease component of the SPS-sensor. In terms of processing, phosphorylated by casein kinase I. Phosphorylation is not dependent on the extracellular amino acid levels, but is a prerequisite for proteolytic processing. Post-translationally, activated by the amino acid-induced proteolytic removal of an N-terminal inhibitory domain by serine protease SSY5, an intrinsic component of the SPS-sensor. Processing requires at least 2 components of the SCF(GRR1) ubiquitin ligase complex, namely the F-box protein GRR1 and the E2 enzyme CDC34, but does not depend on the proteasome. Processing is negatively regulated by the protein phosphatase 2A regulatory subunit RTS1.

It is found in the cell membrane. Its subcellular location is the nucleus. Its function is as follows. Transcription factor involved in the regulation of gene expression in response to extracellular amino acid levels. Synthesized as latent cytoplasmic precursor, which, upon a signal initiated by the plasma membrane SPS (SSY1-PTR3-SSY5) amino acid sensor system, becomes proteolytically activated and relocates to the nucleus, where it induces the expression of SPS-sensor-regulated genes, including the amino-acid permeases AGP1, BAP2, BAP3 and GNP1. Binding to promoters is facilitated by DAL81. Involved in the repression of genes subject to nitrogen catabolite repression and genes involved in stress response. Negatively regulated by inner nuclear membrane proteins ASI1, ASI2 and ASI3, which prevent unprocessed precursor forms that escape cytoplasmic anchoring from inducing SPS-sensor-regulated genes. May be involved in pre-tRNA splicing. This Saccharomyces cerevisiae (strain RM11-1a) (Baker's yeast) protein is Transcription factor STP1 (STP1).